Reading from the N-terminus, the 351-residue chain is Cell division protein FtsZ (351 aa).

GTP contacts are provided by residues 31-35 (GAGNN), 118-120 (GTG), Glu-149, Arg-153, and Asp-197.

This sequence belongs to the FtsZ family. In terms of assembly, homodimer. Polymerizes to form a dynamic ring structure in a strictly GTP-dependent manner. Interacts directly with several other division proteins. Interacts with FtsA.

It is found in the cytoplasm. Functionally, essential cell division protein that forms a contractile ring structure (Z ring) at the future cell division site. The regulation of the ring assembly controls the timing and the location of cell division. One of the functions of the FtsZ ring is to recruit other cell division proteins to the septum to produce a new cell wall between the dividing cells. Binds GTP and shows GTPase activity. The protein is Cell division protein FtsZ of Thermotoga maritima (strain ATCC 43589 / DSM 3109 / JCM 10099 / NBRC 100826 / MSB8).